A 522-amino-acid chain; its full sequence is Sensory neuron membrane protein 1 (522 aa).

The Cytoplasmic segment spans residues 1–11; it reads MQLAKPLKYAA. The helical transmembrane segment at 12-32 threads the bilayer; it reads ISGIVAFVGLMFGWVIFPAIL. Over 33-458 the chain is Extracellular; it reads KSQLKKEMAL…SQLFIPKRVV (426 aa). 3 N-linked (GlcNAc...) asparagine glycosylation sites follow: N67, N105, and N229. 3 cysteine pairs are disulfide-bonded: C268–C333, C297–C352, and C335–C341. N-linked (GlcNAc...) asparagine glycosylation occurs at N440. The helical transmembrane segment at 459–479 threads the bilayer; it reads SVVCWCMISFGSLGVIAAVIF. The Cytoplasmic portion of the chain corresponds to 480-522; the sequence is HFKGDIMHLAVAGDNSVSKIKPENDENKEVGVMGQNQEPAKVM. Positions 500-522 are disordered; sequence KPENDENKEVGVMGQNQEPAKVM. A compositionally biased stretch (polar residues) spans 513–522; that stretch reads GQNQEPAKVM.

The protein belongs to the CD36 family. Principal component of the olfactory cilia membrane. Detected in both male and female antennae but not present in leg, abdomen, thorax or head.

It is found in the cell membrane. Functionally, plays an olfactory role that is not restricted to pheromone sensitivity. The sequence is that of Sensory neuron membrane protein 1 from Bombyx mori (Silk moth).